A 356-amino-acid chain; its full sequence is Fe(3+) ions import ATP-binding protein FbpC 2 (356 aa).

Residues 12–246 (LTVKNLNKFF…PNHLETAKFM (235 aa)) enclose the ABC transporter domain. Residue 44–51 (GSSGCGKT) coordinates ATP.

It belongs to the ABC transporter superfamily. Fe(3+) ion importer (TC 3.A.1.10) family. The complex is composed of two ATP-binding proteins (FbpC), two transmembrane proteins (FbpB) and a solute-binding protein (FbpA).

The protein resides in the cell inner membrane. It catalyses the reaction Fe(3+)(out) + ATP + H2O = Fe(3+)(in) + ADP + phosphate + H(+). In terms of biological role, part of the ABC transporter complex FbpABC involved in Fe(3+) ions import. Responsible for energy coupling to the transport system. This is Fe(3+) ions import ATP-binding protein FbpC 2 from Haemophilus influenzae (strain ATCC 51907 / DSM 11121 / KW20 / Rd).